The primary structure comprises 472 residues: Coronin-6 (472 aa).

WD repeat units lie at residues 23–64, 72–111, 122–161, 165–204, 210–251, and 256–296; these read QAYE…VLPL, KNYPLVTGHTAPVLDIDWCPHNDNVIASASDDTTIMVWQI, EPIITLEGHSKRVGILSWHPTARNVLLSAGGDNVIIIWNV, EVLLSLDDMHPDVIHSVCWNSNGSLLATTCKDKTLRIIDP, VAEQ…LWDP, and EPVA…YFEI. Positions 407-433 are disordered; that stretch reads KRNILDVRPPSGPRRSQSASDAPLSQQ. The segment covering 420 to 433 has biased composition (polar residues); sequence RRSQSASDAPLSQQ. Positions 430–464 form a coiled coil; the sequence is LSQQHTLETLLEEIKALRERVQAQEQRITALENML.

This chain is Coronin-6 (CORO6), found in Homo sapiens (Human).